The sequence spans 234 residues: Large ribosomal subunit protein uL1 (234 aa).

Belongs to the universal ribosomal protein uL1 family. Part of the 50S ribosomal subunit.

Its function is as follows. Binds directly to 23S rRNA. The L1 stalk is quite mobile in the ribosome, and is involved in E site tRNA release. Functionally, protein L1 is also a translational repressor protein, it controls the translation of the L11 operon by binding to its mRNA. The protein is Large ribosomal subunit protein uL1 of Corynebacterium aurimucosum (strain ATCC 700975 / DSM 44827 / CIP 107346 / CN-1) (Corynebacterium nigricans).